The chain runs to 473 residues: Protein TED1 (473 aa).

At 1-8 the chain is on the cytoplasmic side; it reads MLRCAVKK. The chain crosses the membrane as a helical span at residues 9-29; the sequence is FAYFATFLTIVANIYIYTYPS. The Lumenal segment spans residues 30-451; it reads FHPEQCSWNC…FSLCPFAIQH (422 aa). Asparagine 38, asparagine 147, asparagine 229, asparagine 266, and asparagine 307 each carry an N-linked (GlcNAc...) asparagine glycan. The chain crosses the membrane as a helical span at residues 452 to 472; sequence VWWFAKVSLLVTIFTWSSLLF. Position 473 (valine 473) is a topological domain, cytoplasmic.

N-glycosylated.

The protein resides in the endoplasmic reticulum membrane. Acts together with EMP24 and ERV25 in cargo exit from the endoplasmic reticulum. This chain is Protein TED1 (TED1), found in Saccharomyces cerevisiae (strain ATCC 204508 / S288c) (Baker's yeast).